We begin with the raw amino-acid sequence, 350 residues long: Outer membrane protein A (350 aa).

The signal sequence occupies residues 1-21; sequence MKKTAIAIAVALAGFATVAQA. Beta stranded transmembrane passes span 27-37, 55-66, 70-78, 96-107, 112-120, 146-155, 160-167, and 186-194; these read TWYAGAKLGWS, QLGAGAFGGYQV, VGFEMGYDW, QGVQLTAKLGYP, LDVYTRLGG, PVFAGGIEYA, IATRLEYQ, and LLSVGVSYR. Tandem repeats lie at residues 205-206, 207-208, 209-210, and 211-212. The 4 X 2 AA tandem repeats of A-P stretch occupies residues 205–212; that stretch reads APAPAPAP. In terms of domain architecture, OmpA-like spans 214 to 342; that stretch reads VQTKHFTLKS…RVEIEVKGVK (129 aa). A disulfide bridge links cysteine 315 with cysteine 327.

It belongs to the outer membrane OOP (TC 1.B.6) superfamily. OmpA family. In terms of assembly, monomer and homodimer.

The protein resides in the cell outer membrane. With TolR probably plays a role in maintaining the position of the peptidoglycan cell wall in the periplasm. Acts as a porin with low permeability that allows slow penetration of small solutes; an internal gate slows down solute passage. Functionally, required for conjugation with F-type plasmids; probably serves as the mating receptor on recipient cells. In Salmonella typhi, this protein is Outer membrane protein A.